We begin with the raw amino-acid sequence, 353 residues long: Deoxyhypusine synthase (353 aa).

Residues 90–94, 116–118, glutamate 122, and aspartate 228 each bind NAD(+); these read SNLIS and TAG. 121 to 122 is a spermidine binding site; that stretch reads EE. Spermidine is bound at residue aspartate 233. Glycine 275 provides a ligand contact to NAD(+). Histidine 280 is a spermidine binding site. 300–301 is a binding site for NAD(+); sequence TA. Spermidine is bound by residues 306 to 308 and 315 to 321; these read GSD and EAVSWGK. The active-site Nucleophile is the lysine 321. 334–335 contacts NAD(+); sequence EA.

It belongs to the deoxyhypusine synthase family. In terms of assembly, homotetramer. NAD(+) serves as cofactor.

It catalyses the reaction [eIF5A protein]-L-lysine + spermidine = [eIF5A protein]-deoxyhypusine + propane-1,3-diamine. Its pathway is protein modification; eIF5A hypusination. In terms of biological role, catalyzes the NAD-dependent oxidative cleavage of spermidine and the subsequent transfer of the butylamine moiety of spermidine to the epsilon-amino group of a specific lysine residue of the eIF-5A precursor protein to form the intermediate deoxyhypusine residue. In Neurospora crassa (strain ATCC 24698 / 74-OR23-1A / CBS 708.71 / DSM 1257 / FGSC 987), this protein is Deoxyhypusine synthase (dys-1).